The primary structure comprises 735 residues: Capsid protein (735 aa).

Disordered regions lie at residues 577–604 (VVRN…DPKY) and 632–695 (QQAS…TVEQ). Over residues 649–666 (EIKGLTEADQEAEKDSGL) the composition is skewed to basic and acidic residues. Residues 676–685 (SSQETQSEQE) show a composition bias toward low complexity.

This sequence belongs to the anelloviridae capsid protein family.

It is found in the virion. In terms of biological role, self assemble to form an icosahedral capsid. This chain is Capsid protein, found in Pan troglodytes (Chimpanzee).